The chain runs to 241 residues: Putative lipoprotein YvcA (241 aa).

Positions 1-18 are cleaved as a signal peptide; sequence MKKIIFICFSLLLALTGG. Residue C19 is the site of N-palmitoyl cysteine attachment. A lipid anchor (S-diacylglycerol cysteine) is attached at C19. Residues 22-48 are disordered; that stretch reads NDNDKNSTNDNKTEAVKPKDMDPKDLP. Residues 23–46 show a composition bias toward basic and acidic residues; sequence DNDKNSTNDNKTEAVKPKDMDPKD.

Its subcellular location is the cell membrane. Functionally, required for complex colony architecture. The chain is Putative lipoprotein YvcA (yvcA) from Bacillus subtilis (strain 168).